A 642-amino-acid polypeptide reads, in one-letter code: DNA primase (642 aa).

The CHC2-type zinc finger occupies 41-65; that stretch reads CPFHNEKSPSFHVRPNHGHFHCFGC. The 87-residue stretch at 262-348 folds into the Toprim domain; it reads HQAVVVEGYT…AGKSFVAVAA (87 aa). Mg(2+)-binding residues include Glu-268, Asp-319, and Asp-321. Positions 445–480 are disordered; that stretch reads NRRSVPERTRRRSVSVEQSPFMQPPGAPADQLAARP.

It belongs to the DnaG primase family. As to quaternary structure, monomer. Interacts with DnaB. It depends on Zn(2+) as a cofactor. Requires Mg(2+) as cofactor.

It catalyses the reaction ssDNA + n NTP = ssDNA/pppN(pN)n-1 hybrid + (n-1) diphosphate.. In terms of biological role, RNA polymerase that catalyzes the synthesis of short RNA molecules used as primers for DNA polymerase during DNA replication. This is DNA primase from Mycobacterium leprae (strain TN).